The primary structure comprises 113 residues: Large ribosomal subunit protein P2 (113 aa).

The disordered stretch occupies residues 66 to 113 (PVGGGGAVAAADAAPAAAAGGDKKEAKKEEKKEESESEDDDMGFALFE). Residues 73 to 85 (VAAADAAPAAAAG) show a composition bias toward low complexity. The span at 86–99 (GDKKEAKKEEKKEE) shows a compositional bias: basic and acidic residues. Residues Ser100 and Ser102 each carry the phosphoserine modification.

It belongs to the eukaryotic ribosomal protein P1/P2 family. In terms of assembly, P1 and P2 exist as dimers at the large ribosomal subunit.

Plays an important role in the elongation step of protein synthesis. The protein is Large ribosomal subunit protein P2 (RpLP2) of Drosophila melanogaster (Fruit fly).